The sequence spans 252 residues: PF03932 family protein CutC (252 aa).

Belongs to the CutC family.

It localises to the cytoplasm. This Serratia proteamaculans (strain 568) protein is PF03932 family protein CutC.